The primary structure comprises 72 residues: Translation initiation factor IF-1 (72 aa).

The S1-like domain occupies methionine 1–arginine 72.

Belongs to the IF-1 family. In terms of assembly, component of the 30S ribosomal translation pre-initiation complex which assembles on the 30S ribosome in the order IF-2 and IF-3, IF-1 and N-formylmethionyl-tRNA(fMet); mRNA recruitment can occur at any time during PIC assembly.

The protein localises to the cytoplasm. One of the essential components for the initiation of protein synthesis. Stabilizes the binding of IF-2 and IF-3 on the 30S subunit to which N-formylmethionyl-tRNA(fMet) subsequently binds. Helps modulate mRNA selection, yielding the 30S pre-initiation complex (PIC). Upon addition of the 50S ribosomal subunit IF-1, IF-2 and IF-3 are released leaving the mature 70S translation initiation complex. This Pseudoalteromonas atlantica (strain T6c / ATCC BAA-1087) protein is Translation initiation factor IF-1.